A 514-amino-acid chain; its full sequence is Sugar transport protein 3 (514 aa).

The Cytoplasmic segment spans residues 1-19 (MVAEEARKEAMAKSVSGGK). Helical transmembrane passes span 20-40 (ITYF…IFGY), 87-107 (LLTS…LLAS), 124-144 (VSFL…MLII), 147-167 (LLLG…LSEM), 174-194 (GAIS…ANVI), 207-227 (ISLA…LFLP), 289-309 (LVMA…VVAF), 327-347 (MSTL…MLVV), 356-376 (FLIG…IVMV), 392-412 (VVVL…PLGW), 430-450 (VTVA…PPML), and 456-476 (GIFF…QLFL). At 477–514 (PETKNVPIEKVVGLWEKHWFWRRMTSKRDIQETTILSH) the chain is on the cytoplasmic side.

Belongs to the major facilitator superfamily. Sugar transporter (TC 2.A.1.1) family.

It is found in the membrane. Its function is as follows. Mediates an active uptake of hexoses, probably by sugar/hydrogen symport. This chain is Sugar transport protein 3 (STP3), found in Arabidopsis thaliana (Mouse-ear cress).